A 548-amino-acid polypeptide reads, in one-letter code: Elongator complex protein 3 (548 aa).

A Radical SAM core domain is found at 83 to 373; the sequence is RTASGIAVVA…YRVQRDIPMP (291 aa). Cys-100, Cys-110, and Cys-113 together coordinate [4Fe-4S] cluster. Acetyl-CoA is bound by residues Lys-165, 475-478, 498-500, and Tyr-531; these read ELHV and FGM. The N-acetyltransferase domain maps to 397 to 548; that stretch reads TECRDVRTRE…EGPYMVKNLY (152 aa).

It belongs to the ELP3 family. Component of the elongator complex. [4Fe-4S] cluster is required as a cofactor.

Its subcellular location is the cytoplasm. It is found in the nucleus. The catalysed reaction is uridine(34) in tRNA + acetyl-CoA + S-adenosyl-L-methionine + H2O = 5-(carboxymethyl)uridine(34) in tRNA + 5'-deoxyadenosine + L-methionine + CoA + 2 H(+). Its pathway is tRNA modification; 5-methoxycarbonylmethyl-2-thiouridine-tRNA biosynthesis. Functionally, catalytic tRNA acetyltransferase subunit of the elongator complex which is required for multiple tRNA modifications, including mcm5U (5-methoxycarbonylmethyl uridine), mcm5s2U (5-methoxycarbonylmethyl-2-thiouridine), and ncm5U (5-carbamoylmethyl uridine). In the elongator complex, acts as a tRNA uridine(34) acetyltransferase by mediating formation of carboxymethyluridine in the wobble base at position 34 in tRNAs. Involved in neurogenesis. Involved in somite development. The polypeptide is Elongator complex protein 3 (Danio rerio (Zebrafish)).